The chain runs to 468 residues: 6-phosphogluconate dehydrogenase, decarboxylating (468 aa).

Residues G10–G15, N33–S35, I74–S76, and N102 contribute to the NADP(+) site. Substrate-binding positions include N102 and S128 to G130. K182 functions as the Proton acceptor in the catalytic mechanism. Residue H185 to N186 coordinates substrate. The active-site Proton donor is E189. Y190, K259, R286, R445, and H451 together coordinate substrate.

The protein belongs to the 6-phosphogluconate dehydrogenase family. As to quaternary structure, homodimer.

It carries out the reaction 6-phospho-D-gluconate + NADP(+) = D-ribulose 5-phosphate + CO2 + NADPH. It participates in carbohydrate degradation; pentose phosphate pathway; D-ribulose 5-phosphate from D-glucose 6-phosphate (oxidative stage): step 3/3. Functionally, catalyzes the oxidative decarboxylation of 6-phosphogluconate to ribulose 5-phosphate and CO(2), with concomitant reduction of NADP to NADPH. The chain is 6-phosphogluconate dehydrogenase, decarboxylating (gnd) from Buchnera aphidicola subsp. Baizongia pistaciae (strain Bp).